The chain runs to 123 residues: MEQVPVLAEDQRNLNEFSVLHSRKAIQELDIKNLKTQIEDIVDAKNECELLDEDDGDDIPALKVGDAFFQVSLPVLLDQLEQSEESLEKQVDVLRSSMEKDETRIQELKSMLYSKFHDQINLD.

Belongs to the prefoldin subunit beta family. Heterohexamer of two PFD-alpha type and four PFD-beta type subunits.

Binds specifically to cytosolic chaperonin (c-CPN) and transfers target proteins to it. Binds to nascent polypeptide chain and promotes folding in an environment in which there are many competing pathways for nonnative proteins. In Schizosaccharomyces pombe (strain 972 / ATCC 24843) (Fission yeast), this protein is Probable prefoldin subunit 4.